We begin with the raw amino-acid sequence, 1823 residues long: Bromodomain-containing protein DDB_G0280777 (1823 aa).

Disordered stretches follow at residues 44-83 (DNNN…EEDE) and 200-281 (LKQT…RTTS). Basic and acidic residues predominate over residues 65–77 (SNKEEEKEEKEEK). Over residues 210–224 (KRRNQQHQNLLKKQK) the composition is skewed to basic residues. A compositionally biased stretch (basic and acidic residues) spans 225–250 (IQKEKEEREQKEKEQKEKEQKEKEEQ). The span at 251–262 (QQQLFLLQQQQQ) shows a compositional bias: low complexity. The Bromo domain occupies 306–413 (EAQEEMYDQL…KKSKDLMKNV (108 aa)). Disordered regions lie at residues 429–654 (ENKN…EEQT), 753–781 (NCNN…NNSL), 855–886 (INDN…NNKP), 949–993 (NSSK…DEDF), 1055–1079 (LPNN…PPPS), 1190–1386 (IDPK…IQAS), 1453–1477 (QLQQ…QTPQ), and 1679–1823 (QQQQ…QKKQ). Composition is skewed to low complexity over residues 432–486 (NNNN…NTPL), 494–511 (CSPS…TPQS), 520–555 (QQQQ…ISPR), and 570–579 (SSSSLSSSSL). Residues 580 to 590 (ALNSQNENGVN) are compositionally biased toward polar residues. Over residues 601 to 614 (MESEESTNVKKEEN) the composition is skewed to basic and acidic residues. Positions 631–643 (EGEEQQEQEDEEQ) are enriched in acidic residues. 5 stretches are compositionally biased toward low complexity: residues 753-779 (NCNN…NNNN), 863-884 (NNNN…NNNN), 949-958 (NSSKSNNNSN), 1055-1071 (LPNN…TTQL), and 1205-1378 (NNNN…NNNN). Positions 1679-1705 (QQQQPQQQQQQPQQQPQQQPQQQQQPQ) are enriched in low complexity. Basic and acidic residues-rich tracts occupy residues 1716-1737 (PKEK…EKDR) and 1744-1755 (KTESKKESKKSL). 2 stretches are compositionally biased toward low complexity: residues 1756–1767 (NDSSNSDINTSV) and 1789–1806 (SSKQ…TQDS). A compositionally biased stretch (basic residues) spans 1813–1823 (KKKRGRPQKKQ).

This chain is Bromodomain-containing protein DDB_G0280777, found in Dictyostelium discoideum (Social amoeba).